Here is a 552-residue protein sequence, read N- to C-terminus: Cytochrome P450 monooxyhenase eriI (552 aa).

A helical membrane pass occupies residues 9-26; sequence FALKASAAVAVLLLAAWV. Asn50 and Asn447 each carry an N-linked (GlcNAc...) asparagine glycan. Cys495 is a heme binding site.

Belongs to the cytochrome P450 family. The cofactor is heme.

The protein resides in the membrane. It catalyses the reaction (-)-cyatha-3,12-diene + reduced [NADPH--hemoprotein reductase] + O2 = erinacol + oxidized [NADPH--hemoprotein reductase] + H2O + H(+). Its pathway is secondary metabolite biosynthesis. Its function is as follows. Cytochrome P450 monooxygenase; part of the gene cluster that mediates the biosynthesis of erinacines, cyathane-xylosides that show unique biological activities, including leishmanicidal activity, stimulating activity for nerve growth-factor synthesis, and agonistic activity toward the kappa opioid receptor. Within the pathway, eriI hydroxylates cyatha-3,12-diene at C-14 of the seven-membered ring to yield erinacol. The first step of the erinacines biosynthesis pathway is catalyzed by the geranylgeranyl diphosphate (GGPP) synthase eriE via conversion of farnesyl pyrophosphate and isopentyl pyrophosphate into geranylgeranyl pyrophosphate (GGPP). GGPP is then substrate of the diterpene cyclase eriG for the production of cyatha-3,12-diene. The cytochrome P450 monooxygenase eriI then hydroxylates cyatha-3,12-diene at C-14 of the seven-membered ring to produce erinacol, which is further hydroxylated at C-15 by the cytochrome P450 monooxygenase eriC to yield cyathadiol. The cytochrome P450 monooxygenase eriA then catalyzes C-11 hydroxylation in the presence of the short chain dehydrogenase/reductase (SDR) eriH, which leads to the production of cyathatriol. The acetyltransferase eriL converts cyathatriol into 11-O-acetyl-cyathatriol. The SDR eriH catalyzes further oxidation of 11-O-acetyl-cyathatriol into 1-O-acetylcyathin A3. Finally, the glycosyl transferase eriJ tranfers xylose from UDP-xylose onto C-14 of 11-O-acetyl-cyathatriol to form eracine Q. EriJ is also able to convert 11-O-acetyl-cyathatriol to eracine Q2 by using UDP-D-glucose as cosubstrate, but at a lower rate. Cytochrome P450 monooxygenase; part of the gene cluster that mediates the biosynthesis of erinacines, cyathane-xylosides that show unique biological activities, including leishmanicidal activity, stimulating activity for nerve growth-factor synthesis, and agonistic activity toward the kappa opioid receptor. The geranylgeranyl diphosphate (GGPP) synthase eriE catalyzes the first step in erinacines biosynthesis via conversion of farnesyl pyrophosphate and isopentyl pyrophosphate into geranylgeranyl pyrophosphate (GGPP). GGPP is then substrate of the diterpene cyclase eriG for the production of cyatha-3,12-diene. EriG is unable to use geranyl diphosphate (GPP) or farnesyl diphosphate (FPP) as substrates. The cytochrome P450 monooxygenase eriI then hydroxylates cyatha-3,12-diene at C-14 of the seven-membered ring to produce erinacol, which is further hydroxylated at C-15 by the cytochrome P450 monooxygenase eriC to yield cyathadiol. The cytochrome P450 monooxygenase eriA then catalyzes C-11 hydroxylation in the presence of the short chain dehydrogenase/reductase (SDR) eriH, which leads to the production of cyathatriol. The acetyltransferase eriL converts cyathatriol into 11-O-acetyl-cyathatriol. The SDR eriH catalyzes further oxidation of 11-O-acetyl-cyathatriol into 1-O-acetylcyathin A3. Finally, the glycosyl transferase eriJ tranfers xylose from UDP-xylose onto C-14 of 11-O-acetyl-cyathatriol to form eracine Q. EriJ is also able to convert 11-O-acetyl-cyathatriol to eracine Q2 by using UDP-D-glucose as cosubstrate, but at a lower rate. In the absence of eriL and eriJ, the SDR eriH is able to convert cyathatriol to cyathin A3; this is likely a switching mechanism in the biosynthesis of cyathins (C-14 ketogroup)and erinacines (C-14 glycosylated group). The roles of the SDR eriB, the polyprenyl transferase eriF and the dehydrogenase eriK have still to be identified. The chain is Cytochrome P450 monooxyhenase eriI from Hericium erinaceus (Lion's mane mushroom).